The primary structure comprises 570 residues: Glycine--tRNA ligase (570 aa).

Substrate-binding residues include Arg-95 and Glu-159. Residues Arg-191–Glu-193, Ile-201–Phe-206, Glu-312–Val-313, and Gly-426–Arg-429 each bind ATP. Phe-206–Glu-210 lines the substrate pocket. Glu-422–Gly-426 contacts substrate.

It belongs to the class-II aminoacyl-tRNA synthetase family.

It localises to the cytoplasm. It carries out the reaction tRNA(Gly) + glycine + ATP = glycyl-tRNA(Gly) + AMP + diphosphate. Its function is as follows. Catalyzes the attachment of glycine to tRNA(Gly). In Archaeoglobus fulgidus (strain ATCC 49558 / DSM 4304 / JCM 9628 / NBRC 100126 / VC-16), this protein is Glycine--tRNA ligase.